The chain runs to 500 residues: MQLVSIFLFISFLFLLRKWKKYLNNSQTKKLPPGPWKLPFIGGMHHLAGGLPHRVLRDLAEKYGPLMHLQLGEVSAVVVTSPEMAKQVLKTHDIAFASRPKLLAMDIICYNRRDIAFSPYGDYWRQMRKICIMEVLSAKSVRSFSSIRHDEVVRLIDSIQPCFTSGELVNFTERIIWFTSSMTCRSAFGQVLKEQEVFIKLIREVISLAEGFDVADIFPSYKFLHGFGGAKQKLLNAHRKVDSIVEDVIKEHKKNLATRKSDDAIGGEDLVDALVRLMNDKSLQFPINNDNIKAVIIDLFAAGTETSSTTTVWAMAEMLKNPSVFAKAQAKVREAFRDKVTFDENDVEELKYLKLVIKETMRLHAPVPLLVPRECREETEINGYTIPVKTKVMVNVWALGRDPKYWDDAESFKPERFEQCSIDFIGNNFEYLPFGGGRRICPGISFGLANVYLPLAQLLYHFDWKLPTGMEPKDLDLTESAGITAARKGDLYLIATPHQP.

Residue Cys-441 participates in heme binding.

It belongs to the cytochrome P450 family. Requires heme as cofactor.

This chain is Cytochrome P450 71D7 (CYP71D7), found in Solanum chacoense (Chaco potato).